We begin with the raw amino-acid sequence, 784 residues long: DNA repair and recombination protein RAD54-like (784 aa).

The segment at 2-9 (RRSLAPSQ) is required for chromatin remodeling, strand pairing activities and coupling of ATPase activity. T22 bears the Phosphothreonine mark. One can recognise a Helicase ATP-binding domain in the interval 169 to 344 (EGKKGNFNGC…FSLVNFVNPE (176 aa)). ATP is bound at residue 182 to 189 (DEMGLGKT). Residues 295-298 (DEGH) carry the DEGH box motif. Residues 501–658 (LLDFMLATIR…NNESAEKHFT (158 aa)) enclose the Helicase C-terminal domain. A disordered region spans residues 742–784 (QAIKESEETKQEAEDTSIPAKSKRKRSTTPESDDCNDEDFKGF). Residues 745 to 754 (KESEETKQEA) are compositionally biased toward basic and acidic residues.

The protein belongs to the SNF2/RAD54 helicase family. Interacts (via N-terminus) with spn-A/Rad51.

It localises to the nucleus. In terms of biological role, involved in mitotic DNA repair and meiotic recombination. Functions in the recombinational DNA repair pathway. Essential for interhomolog gene conversion (GC), but may have a less important role in intersister GC than spn-A/Rad51. In the presence of DNA, spn-A/Rad51 enhances the ATPase activity of okr/Rad54. The chain is DNA repair and recombination protein RAD54-like from Drosophila willistoni (Fruit fly).